A 91-amino-acid polypeptide reads, in one-letter code: Small ribosomal subunit protein uS19 (91 aa).

This sequence belongs to the universal ribosomal protein uS19 family.

Functionally, protein S19 forms a complex with S13 that binds strongly to the 16S ribosomal RNA. The polypeptide is Small ribosomal subunit protein uS19 (Sphingopyxis alaskensis (strain DSM 13593 / LMG 18877 / RB2256) (Sphingomonas alaskensis)).